A 544-amino-acid polypeptide reads, in one-letter code: Cytochrome P450 monooxygenase verL (544 aa).

A helical transmembrane segment spans residues 3–23 (VALFPILPIGCLLIYIIFKLW). Cys-446 contributes to the heme binding site. Positions 520–544 (QEKGIDGWKGKKESSSEENRGVSSR) are disordered.

The protein belongs to the cytochrome P450 family. The cofactor is heme.

It localises to the membrane. Its pathway is mycotoxin biosynthesis. In terms of biological role, cytochrome P450 monooxygenase; part of the gene cluster that mediates the biosynthesis of 11'-deoxyverticillin A, one of the dimeric epipolythiodioxopiperazines (ETPs) from the verticillin family that act as mycotoxins. 11'-deoxyverticillin A is required for normal conidiation. The nonribosomal peptide synthetase verP is speculated to be responsible for condensation of amino acids to form the carbon skeleton of verticillin, whereas the cluster-specific tailoring enzymes are involved in further modifications leading to the production of 11'-deoxyverticillin A. The protein is Cytochrome P450 monooxygenase verL of Clonostachys rogersoniana.